The following is an 88-amino-acid chain: UPF0297 protein str1959 (88 aa).

The protein belongs to the UPF0297 family.

In Streptococcus thermophilus (strain CNRZ 1066), this protein is UPF0297 protein str1959.